A 147-amino-acid chain; its full sequence is Large ribosomal subunit protein uL11 (147 aa).

It belongs to the universal ribosomal protein uL11 family. In terms of assembly, part of the ribosomal stalk of the 50S ribosomal subunit. Interacts with L10 and the large rRNA to form the base of the stalk. L10 forms an elongated spine to which L12 dimers bind in a sequential fashion forming a multimeric L10(L12)X complex. Post-translationally, one or more lysine residues are methylated.

Its function is as follows. Forms part of the ribosomal stalk which helps the ribosome interact with GTP-bound translation factors. In Sorangium cellulosum (strain So ce56) (Polyangium cellulosum (strain So ce56)), this protein is Large ribosomal subunit protein uL11.